Here is a 281-residue protein sequence, read N- to C-terminus: Urease accessory protein UreD (281 aa).

Belongs to the UreD family. In terms of assembly, ureD, UreF and UreG form a complex that acts as a GTP-hydrolysis-dependent molecular chaperone, activating the urease apoprotein by helping to assemble the nickel containing metallocenter of UreC. The UreE protein probably delivers the nickel.

The protein resides in the cytoplasm. In terms of biological role, required for maturation of urease via the functional incorporation of the urease nickel metallocenter. The protein is Urease accessory protein UreD of Pseudomonas savastanoi pv. phaseolicola (strain 1448A / Race 6) (Pseudomonas syringae pv. phaseolicola (strain 1448A / Race 6)).